We begin with the raw amino-acid sequence, 224 residues long: Phosphoribosylformylglycinamidine synthase subunit PurQ (224 aa).

The Glutamine amidotransferase type-1 domain maps to 2–224 (KFAVIVFPGS…IVDNFVKGGV (223 aa)). The Nucleophile role is filled by Cys-86. Active-site residues include His-194 and Glu-196.

Part of the FGAM synthase complex composed of 1 PurL, 1 PurQ and 2 PurS subunits.

The protein resides in the cytoplasm. It catalyses the reaction N(2)-formyl-N(1)-(5-phospho-beta-D-ribosyl)glycinamide + L-glutamine + ATP + H2O = 2-formamido-N(1)-(5-O-phospho-beta-D-ribosyl)acetamidine + L-glutamate + ADP + phosphate + H(+). The catalysed reaction is L-glutamine + H2O = L-glutamate + NH4(+). It functions in the pathway purine metabolism; IMP biosynthesis via de novo pathway; 5-amino-1-(5-phospho-D-ribosyl)imidazole from N(2)-formyl-N(1)-(5-phospho-D-ribosyl)glycinamide: step 1/2. Functionally, part of the phosphoribosylformylglycinamidine synthase complex involved in the purines biosynthetic pathway. Catalyzes the ATP-dependent conversion of formylglycinamide ribonucleotide (FGAR) and glutamine to yield formylglycinamidine ribonucleotide (FGAM) and glutamate. The FGAM synthase complex is composed of three subunits. PurQ produces an ammonia molecule by converting glutamine to glutamate. PurL transfers the ammonia molecule to FGAR to form FGAM in an ATP-dependent manner. PurS interacts with PurQ and PurL and is thought to assist in the transfer of the ammonia molecule from PurQ to PurL. The protein is Phosphoribosylformylglycinamidine synthase subunit PurQ of Caldanaerobacter subterraneus subsp. tengcongensis (strain DSM 15242 / JCM 11007 / NBRC 100824 / MB4) (Thermoanaerobacter tengcongensis).